A 377-amino-acid polypeptide reads, in one-letter code: 3-(aryl)acrylate reductase (377 aa).

FAD is bound by residues 121–130 (FALTEPGAGS), 154–156 (FIT), R266, Q277, and 334–338 (QIHGG). E361 functions as the Proton acceptor in the catalytic mechanism. 363–365 (TSE) contacts FAD.

The protein belongs to the acyl-CoA dehydrogenase family. It depends on FAD as a cofactor.

The catalysed reaction is 3-phenylpropanoate + oxidized [electron-transfer flavoprotein] + H(+) = (E)-cinnamate + reduced [electron-transfer flavoprotein]. The enzyme catalyses phloretate + oxidized [electron-transfer flavoprotein] + H(+) = (E)-4-coumarate + reduced [electron-transfer flavoprotein]. It catalyses the reaction indole-3-propanoate + oxidized [electron-transfer flavoprotein] + H(+) = (E)-3-(indol-3-yl)acrylate + reduced [electron-transfer flavoprotein]. Its pathway is amino-acid degradation. Essential for the reductive metabolism of L-phenylalanine, L-tyrosine and L-tryptophan. Catalyzes the reduction of phenylacrylic acid to phenylpropionic acid, 4-hydroxy-phenylacrylic acid to 4-hydroxy-phenylpropionic acid, and indoleacrylic acid to indolepropionic acid. The sequence is that of 3-(aryl)acrylate reductase from Clostridium sporogenes (strain ATCC 15579).